Here is a 344-residue protein sequence, read N- to C-terminus: Thioredoxin domain-containing protein 15 (344 aa).

An N-terminal signal peptide occupies residues 1–20 (MQLLCWWQVLLWVLGLPAHG). At 21 to 305 (LEVAEDSGHP…GPLPSTLIKT (285 aa)) the chain is on the extracellular side. 2 disordered regions span residues 55–119 (DHRD…FGLQ) and 136–156 (GVTE…SLKS). Over residues 88-97 (EDQRSPEAHD) the composition is skewed to basic and acidic residues. Residues 163–280 (ERNVTGLENF…LKIFIFNQTG (118 aa)) form the Thioredoxin domain. Residues Asn171, Asn178, Asn190, and Asn277 are each glycosylated (N-linked (GlcNAc...) asparagine). A helical transmembrane segment spans residues 306-326 (VDWLLVFSLFFLISFIMYATI). Residues 327-344 (RTESIRWLIPGQEQEHAE) are Cytoplasmic-facing.

Its subcellular location is the cell projection. It is found in the cilium membrane. Functionally, acts as a positive regulator of ciliary hedgehog signaling. Required for cilia biogenesis. In Mus musculus (Mouse), this protein is Thioredoxin domain-containing protein 15 (Txndc15).